Here is a 179-residue protein sequence, read N- to C-terminus: Translation initiation factor IF-3 (179 aa).

It belongs to the IF-3 family. Monomer.

Its subcellular location is the cytoplasm. IF-3 binds to the 30S ribosomal subunit and shifts the equilibrium between 70S ribosomes and their 50S and 30S subunits in favor of the free subunits, thus enhancing the availability of 30S subunits on which protein synthesis initiation begins. The protein is Translation initiation factor IF-3 of Buchnera aphidicola subsp. Schizaphis graminum (strain Sg).